The sequence spans 320 residues: Replication factor C small subunit 2 (320 aa).

44–51 (GPPGTGKT) lines the ATP pocket.

Belongs to the activator 1 small subunits family. RfcS subfamily. Heteromultimer composed of small subunits (RfcS) and large subunits (RfcL).

In terms of biological role, part of the RFC clamp loader complex which loads the PCNA sliding clamp onto DNA. The sequence is that of Replication factor C small subunit 2 from Pyrobaculum islandicum (strain DSM 4184 / JCM 9189 / GEO3).